Reading from the N-terminus, the 51-residue chain is Large ribosomal subunit protein eL39 (51 aa).

This sequence belongs to the eukaryotic ribosomal protein eL39 family.

This chain is Large ribosomal subunit protein eL39 (rpl39e), found in Methanothermobacter thermautotrophicus (strain ATCC 29096 / DSM 1053 / JCM 10044 / NBRC 100330 / Delta H) (Methanobacterium thermoautotrophicum).